The sequence spans 803 residues: Translation initiation factor IF-2 (803 aa).

Disordered regions lie at residues 95-125 (PVVEQKRETEPAPTQEVPLTSDTTNLNEKAE) and 138-178 (EVKE…EREE). Residues 111 to 121 (VPLTSDTTNLN) show a composition bias toward polar residues. Residues 138 to 155 (EVKEEAKKTPSEKKETPK) show a composition bias toward basic and acidic residues. The span at 156–167 (KGPRKETRRSRK) shows a compositional bias: basic residues. Positions 168 to 178 (PDKEDKWEREE) are enriched in basic and acidic residues. In terms of domain architecture, tr-type G spans 302 to 471 (PRAPVVTIMG…LLQAEVLELK (170 aa)). The segment at 311 to 318 (GHVDHGKT) is G1. 311–318 (GHVDHGKT) is a binding site for GTP. Positions 336–340 (GITQH) are G2. Positions 357–360 (DTPG) are G3. GTP contacts are provided by residues 357-361 (DTPGH) and 411-414 (NKID). The segment at 411–414 (NKID) is G4. Residues 447-449 (SAK) form a G5 region.

The protein belongs to the TRAFAC class translation factor GTPase superfamily. Classic translation factor GTPase family. IF-2 subfamily.

It localises to the cytoplasm. In terms of biological role, one of the essential components for the initiation of protein synthesis. Protects formylmethionyl-tRNA from spontaneous hydrolysis and promotes its binding to the 30S ribosomal subunits. Also involved in the hydrolysis of GTP during the formation of the 70S ribosomal complex. The chain is Translation initiation factor IF-2 from Coxiella burnetii (strain RSA 331 / Henzerling II).